The primary structure comprises 331 residues: Type 2 lactosamine alpha-2,3-sialyltransferase (331 aa).

Residues 1-4 (MRGY) are Cytoplasmic-facing. A helical; Signal-anchor for type II membrane protein membrane pass occupies residues 5 to 25 (LVAIFLSAVFLYYVLHCILWG). The Lumenal segment spans residues 26–331 (TNVYWAAPVE…KNLVINLTQD (306 aa)). Residues Asn129, Asn181, Asn282, Asn295, Asn308, and Asn327 are each glycosylated (N-linked (GlcNAc...) asparagine).

It belongs to the glycosyltransferase 29 family.

The protein localises to the golgi apparatus membrane. It catalyses the reaction a neolactoside nLc4Cer(d18:1(4E)) + CMP-N-acetyl-beta-neuraminate = a neolactoside IV(3)-alpha-NeuAc-nLc4Cer(d18:1(4E)) + CMP + H(+). The enzyme catalyses a beta-D-galactosyl-(1-&gt;4)-N-acetyl-beta-D-glucosaminyl derivative + CMP-N-acetyl-beta-neuraminate = an N-acetyl-alpha-neuraminyl-(2-&gt;3)-beta-D-galactosyl-(1-&gt;4)-N-acetyl-beta-D-glucosaminyl derivative + CMP + H(+). The catalysed reaction is a neolactoside nLc6Cer(d18:1(4E)) + CMP-N-acetyl-beta-neuraminate = a neolactoside VI(3)-alpha-NeuNAc-nLc6Cer(d18:1(4E)) + CMP + H(+). Its function is as follows. Transfers the sialyl residue from CMP-N-acetyl-beta-neuraminate to the terminal galactose residue on sugar chains of glycoproteins and glycolipids. It's alpha-2,3-sialyltransferase activity is specific toward type II glycan chains (Galbeta1-4GlcNAc) on glycoproteins and glycolipids such as neolactosides nLc4Cer and nLc6Cer, whose sialyl-products serve as precursors for the Lewis X antigen. Critically involved in the synthesis of functional selectin ligands needed for neutrophil recruitment during inflammation and lymphocyte homing to the lymph nodes. The sequence is that of Type 2 lactosamine alpha-2,3-sialyltransferase (ST3GAL6) from Pongo abelii (Sumatran orangutan).